Consider the following 176-residue polypeptide: Cytochrome b (176 aa).

3 helical membrane-spanning segments follow: residues 33-53 (FGSLLGVCLTMQIMTGLFLAM), 77-98 (WLLRYLHANGASMFFICLYLHI), and 113-133 (WNVGIILLFAVMATAFMGYVL). His-83 and His-97 together coordinate heme b.

The protein belongs to the cytochrome b family. In terms of assembly, the cytochrome bc1 complex contains 11 subunits: 3 respiratory subunits (MT-CYB, CYC1 and UQCRFS1), 2 core proteins (UQCRC1 and UQCRC2) and 6 low-molecular weight proteins (UQCRH/QCR6, UQCRB/QCR7, UQCRQ/QCR8, UQCR10/QCR9, UQCR11/QCR10 and a cleavage product of UQCRFS1). This cytochrome bc1 complex then forms a dimer. It depends on heme b as a cofactor.

The protein localises to the mitochondrion inner membrane. Component of the ubiquinol-cytochrome c reductase complex (complex III or cytochrome b-c1 complex) that is part of the mitochondrial respiratory chain. The b-c1 complex mediates electron transfer from ubiquinol to cytochrome c. Contributes to the generation of a proton gradient across the mitochondrial membrane that is then used for ATP synthesis. The protein is Cytochrome b (MT-CYB) of Eumops perotis (Western bonneted bat).